Consider the following 181-residue polypeptide: Protein GrpE (181 aa).

Belongs to the GrpE family. As to quaternary structure, homodimer.

The protein resides in the cytoplasm. In terms of biological role, participates actively in the response to hyperosmotic and heat shock by preventing the aggregation of stress-denatured proteins, in association with DnaK and GrpE. It is the nucleotide exchange factor for DnaK and may function as a thermosensor. Unfolded proteins bind initially to DnaJ; upon interaction with the DnaJ-bound protein, DnaK hydrolyzes its bound ATP, resulting in the formation of a stable complex. GrpE releases ADP from DnaK; ATP binding to DnaK triggers the release of the substrate protein, thus completing the reaction cycle. Several rounds of ATP-dependent interactions between DnaJ, DnaK and GrpE are required for fully efficient folding. This is Protein GrpE from Delftia acidovorans (strain DSM 14801 / SPH-1).